A 302-amino-acid polypeptide reads, in one-letter code: Chloramphenicol resistance protein (302 aa).

It is found in the cell membrane. Its function is as follows. This protein is thought to be a membrane-associated barrier of drug uptake. The polypeptide is Chloramphenicol resistance protein (cml) (Escherichia coli).